Here is a 110-residue protein sequence, read N- to C-terminus: Small heat shock protein hspG11 (110 aa).

One can recognise a sHSP domain in the interval 30–110 (KTIIDILPPM…KSTSTSSTFR (81 aa)). The interval 78-110 (KDLNKQHNNNNNNNNNNNNLVIEKSTSTSSTFR) is disordered. A compositionally biased stretch (low complexity) spans 85 to 96 (NNNNNNNNNNNN). Positions 101–110 (KSTSTSSTFR) are enriched in polar residues.

Belongs to the small heat shock protein (HSP20) family.

This chain is Small heat shock protein hspG11 (hspG11), found in Dictyostelium discoideum (Social amoeba).